Reading from the N-terminus, the 166-residue chain is Large ribosomal subunit protein uL10 (166 aa).

The protein belongs to the universal ribosomal protein uL10 family. Part of the ribosomal stalk of the 50S ribosomal subunit. The N-terminus interacts with L11 and the large rRNA to form the base of the stalk. The C-terminus forms an elongated spine to which L12 dimers bind in a sequential fashion forming a multimeric L10(L12)X complex.

Functionally, forms part of the ribosomal stalk, playing a central role in the interaction of the ribosome with GTP-bound translation factors. This Aeromonas salmonicida (strain A449) protein is Large ribosomal subunit protein uL10.